Reading from the N-terminus, the 498-residue chain is ATP synthase subunit alpha, chloroplastic (498 aa).

Glycine 170 to threonine 177 provides a ligand contact to ATP.

The protein belongs to the ATPase alpha/beta chains family. As to quaternary structure, F-type ATPases have 2 components, CF(1) - the catalytic core - and CF(0) - the membrane proton channel. CF(1) has five subunits: alpha(3), beta(3), gamma(1), delta(1), epsilon(1). CF(0) has four main subunits: a, b, b' and c.

It is found in the plastid. Its subcellular location is the chloroplast thylakoid membrane. It carries out the reaction ATP + H2O + 4 H(+)(in) = ADP + phosphate + 5 H(+)(out). Its function is as follows. Produces ATP from ADP in the presence of a proton gradient across the membrane. The alpha chain is a regulatory subunit. The chain is ATP synthase subunit alpha, chloroplastic from Oltmannsiellopsis viridis (Marine flagellate).